The primary structure comprises 586 residues: Phosphomethylpyrimidine synthase (586 aa).

The interval 1-58 (MKQSVSAEQIELKSSLPGSKKVYVDGTREGMKVPMREIEQSDTNGVQNPPIRVYDTSG) is disordered. A compositionally biased stretch (basic and acidic residues) spans 22–39 (VYVDGTREGMKVPMREIE). Residues asparagine 193, methionine 222, tyrosine 251, histidine 287, 307–309 (SRG), 348–351 (DGLR), and glutamate 387 each bind substrate. Zn(2+) is bound at residue histidine 391. Tyrosine 414 provides a ligand contact to substrate. Residue histidine 455 participates in Zn(2+) binding. 3 residues coordinate [4Fe-4S] cluster: cysteine 535, cysteine 538, and cysteine 543.

It belongs to the ThiC family. [4Fe-4S] cluster serves as cofactor.

It carries out the reaction 5-amino-1-(5-phospho-beta-D-ribosyl)imidazole + S-adenosyl-L-methionine = 4-amino-2-methyl-5-(phosphooxymethyl)pyrimidine + CO + 5'-deoxyadenosine + formate + L-methionine + 3 H(+). Its pathway is cofactor biosynthesis; thiamine diphosphate biosynthesis. Its function is as follows. Catalyzes the synthesis of the hydroxymethylpyrimidine phosphate (HMP-P) moiety of thiamine from aminoimidazole ribotide (AIR) in a radical S-adenosyl-L-methionine (SAM)-dependent reaction. This is Phosphomethylpyrimidine synthase from Bacillus mycoides (strain KBAB4) (Bacillus weihenstephanensis).